The following is a 198-amino-acid chain: Holliday junction branch migration complex subunit RuvA (198 aa).

A domain I region spans residues 1–64 (MIAHLRGTLL…EDAIALFGFL (64 aa)). The segment at 65–141 (DREEKRLFER…LDDLIAAAPA (77 aa)) is domain II. The flexible linker stretch occupies residues 141–145 (AAGPV). The domain III stretch occupies residues 146-198 (AAGPAAEDVLSALLNLGYQRPAALKAIETAVEKDAAAGEDFDLLFRAALKLIR).

Belongs to the RuvA family. As to quaternary structure, homotetramer. Forms an RuvA(8)-RuvB(12)-Holliday junction (HJ) complex. HJ DNA is sandwiched between 2 RuvA tetramers; dsDNA enters through RuvA and exits via RuvB. An RuvB hexamer assembles on each DNA strand where it exits the tetramer. Each RuvB hexamer is contacted by two RuvA subunits (via domain III) on 2 adjacent RuvB subunits; this complex drives branch migration. In the full resolvosome a probable DNA-RuvA(4)-RuvB(12)-RuvC(2) complex forms which resolves the HJ.

The protein resides in the cytoplasm. The RuvA-RuvB-RuvC complex processes Holliday junction (HJ) DNA during genetic recombination and DNA repair, while the RuvA-RuvB complex plays an important role in the rescue of blocked DNA replication forks via replication fork reversal (RFR). RuvA specifically binds to HJ cruciform DNA, conferring on it an open structure. The RuvB hexamer acts as an ATP-dependent pump, pulling dsDNA into and through the RuvAB complex. HJ branch migration allows RuvC to scan DNA until it finds its consensus sequence, where it cleaves and resolves the cruciform DNA. The protein is Holliday junction branch migration complex subunit RuvA of Acidobacterium capsulatum (strain ATCC 51196 / DSM 11244 / BCRC 80197 / JCM 7670 / NBRC 15755 / NCIMB 13165 / 161).